Here is a 33-residue protein sequence, read N- to C-terminus: Protein YtiC (33 aa).

A helical transmembrane segment spans residues 10-29 (FDMLSIYIIYKLIVSNNTWL).

The protein localises to the cell inner membrane. The chain is Protein YtiC from Escherichia coli (strain K12).